The chain runs to 313 residues: 1-phosphofructokinase (313 aa).

ATP-binding positions include 222-227 (SMGAKG) and 254-255 (GD). Asp-255 serves as the catalytic Proton acceptor.

It belongs to the carbohydrate kinase PfkB family.

It carries out the reaction beta-D-fructose 1-phosphate + ATP = beta-D-fructose 1,6-bisphosphate + ADP + H(+). Its function is as follows. Catalyzes the ATP-dependent phosphorylation of fructose-l-phosphate to fructose-l,6-bisphosphate. In Haemophilus influenzae (strain ATCC 51907 / DSM 11121 / KW20 / Rd), this protein is 1-phosphofructokinase (fruK).